Here is a 410-residue protein sequence, read N- to C-terminus: Multifunctional CCA protein (410 aa).

2 residues coordinate ATP: Gly8 and Arg11. The CTP site is built by Gly8 and Arg11. Mg(2+)-binding residues include Asp21 and Asp23. The ATP site is built by Arg91, Arg137, and Arg140. CTP-binding residues include Arg91, Arg137, and Arg140. The HD domain occupies 225–326 (SGIHTLMTLQ…LNVLKKTDAF (102 aa)).

This sequence belongs to the tRNA nucleotidyltransferase/poly(A) polymerase family. Bacterial CCA-adding enzyme type 1 subfamily. In terms of assembly, monomer. Can also form homodimers and oligomers. Requires Mg(2+) as cofactor. It depends on Ni(2+) as a cofactor.

It catalyses the reaction a tRNA precursor + 2 CTP + ATP = a tRNA with a 3' CCA end + 3 diphosphate. The catalysed reaction is a tRNA with a 3' CCA end + 2 CTP + ATP = a tRNA with a 3' CCACCA end + 3 diphosphate. Catalyzes the addition and repair of the essential 3'-terminal CCA sequence in tRNAs without using a nucleic acid template. Adds these three nucleotides in the order of C, C, and A to the tRNA nucleotide-73, using CTP and ATP as substrates and producing inorganic pyrophosphate. tRNA 3'-terminal CCA addition is required both for tRNA processing and repair. Also involved in tRNA surveillance by mediating tandem CCA addition to generate a CCACCA at the 3' terminus of unstable tRNAs. While stable tRNAs receive only 3'-terminal CCA, unstable tRNAs are marked with CCACCA and rapidly degraded. The polypeptide is Multifunctional CCA protein (Neisseria gonorrhoeae (strain ATCC 700825 / FA 1090)).